Here is a 365-residue protein sequence, read N- to C-terminus: Peptide chain release factor 2 (365 aa).

An N5-methylglutamine modification is found at Q252.

Belongs to the prokaryotic/mitochondrial release factor family. Post-translationally, methylated by PrmC. Methylation increases the termination efficiency of RF2.

The protein localises to the cytoplasm. Functionally, peptide chain release factor 2 directs the termination of translation in response to the peptide chain termination codons UGA and UAA. The polypeptide is Peptide chain release factor 2 (Escherichia coli (strain K12 / MC4100 / BW2952)).